We begin with the raw amino-acid sequence, 329 residues long: NADH-quinone oxidoreductase subunit H (329 aa).

8 helical membrane passes run Ile-11 to Leu-31, Leu-81 to Val-101, Ile-114 to Gly-134, Ile-154 to Phe-174, Thr-187 to Val-207, Phe-238 to Phe-258, Gln-270 to Leu-290, and Phe-309 to Gln-329.

This sequence belongs to the complex I subunit 1 family. As to quaternary structure, NDH-1 is composed of 13 different subunits. Subunits NuoA, H, J, K, L, M, N constitute the membrane sector of the complex.

The protein localises to the cell inner membrane. The catalysed reaction is a quinone + NADH + 5 H(+)(in) = a quinol + NAD(+) + 4 H(+)(out). Functionally, NDH-1 shuttles electrons from NADH, via FMN and iron-sulfur (Fe-S) centers, to quinones in the respiratory chain. The immediate electron acceptor for the enzyme in this species is believed to be ubiquinone. Couples the redox reaction to proton translocation (for every two electrons transferred, four hydrogen ions are translocated across the cytoplasmic membrane), and thus conserves the redox energy in a proton gradient. This subunit may bind ubiquinone. The sequence is that of NADH-quinone oxidoreductase subunit H from Azotobacter vinelandii (strain DJ / ATCC BAA-1303).